A 37-amino-acid chain; its full sequence is MVEPLLCGIVLGLIPITLAGLFVAAYQQYKRGKELGV.

A helical membrane pass occupies residues Leu5–Ala25.

It belongs to the PetG family. As to quaternary structure, the 4 large subunits of the cytochrome b6-f complex are cytochrome b6, subunit IV (17 kDa polypeptide, PetD), cytochrome f and the Rieske protein, while the 4 small subunits are PetG, PetL, PetM and PetN. The complex functions as a dimer.

It localises to the cellular thylakoid membrane. Its function is as follows. Component of the cytochrome b6-f complex, which mediates electron transfer between photosystem II (PSII) and photosystem I (PSI), cyclic electron flow around PSI, and state transitions. PetG is required for either the stability or assembly of the cytochrome b6-f complex. The sequence is that of Cytochrome b6-f complex subunit 5 from Cyanothece sp. (strain PCC 7425 / ATCC 29141).